The chain runs to 245 residues: MYPVDLHMHTIASTHAYSTLHDYIAEAKLKNIKLFAITDHGPDMADAPHYWHFMNMRVWPRLVDGVGILRGIEANIKNLDGDIDCTGPMLDAIDLLIAGFHEPVFPPQDKAANTQAMIATMAQGNVHIISHPGNPKYPVDIKAIAEAAAKYNVALELNNSSFTHSRKGSETNCRAIAEAVRDAGGWLALGSDSHIAYSLGIFEHCERIIAEVNFPQERILNVSPRRLLNFLEQRGRAPIPELAGL.

Zn(2+) contacts are provided by H7, H9, H15, H40, E73, H101, H131, D192, and H194.

It belongs to the PHP family. As to quaternary structure, homotrimer. The cofactor is Zn(2+).

The chain is Probable phosphatase YE2421 from Yersinia enterocolitica serotype O:8 / biotype 1B (strain NCTC 13174 / 8081).